A 214-amino-acid polypeptide reads, in one-letter code: RNA pyrophosphohydrolase (214 aa).

In terms of domain architecture, Nudix hydrolase spans 6 to 149 (GFRPNVGIIL…KRDVYQLALT (144 aa)). Residues 38–59 (GGIKYGETPMQAMYRELHEETG) carry the Nudix box motif.

It belongs to the Nudix hydrolase family. RppH subfamily. It depends on a divalent metal cation as a cofactor.

Its function is as follows. Accelerates the degradation of transcripts by removing pyrophosphate from the 5'-end of triphosphorylated RNA, leading to a more labile monophosphorylated state that can stimulate subsequent ribonuclease cleavage. This is RNA pyrophosphohydrolase from Burkholderia cenocepacia (strain ATCC BAA-245 / DSM 16553 / LMG 16656 / NCTC 13227 / J2315 / CF5610) (Burkholderia cepacia (strain J2315)).